The chain runs to 85 residues: Sugar transporter SemiSWEET (85 aa).

Residues 2-59 (ENLIGYVAAFLTTVSFLPQVLRVVMTKQTRDISRNMYIMFFLGVVLWFVYGILRSDLP) enclose the PQ-loop domain. 3 helical membrane-spanning segments follow: residues 5–25 (IGYVAAFLTTVSFLPQVLRVV), 33–53 (ISRNMYIMFFLGVVLWFVYGI), and 57–77 (DLPIILANVVTLFFVTIILYY).

In terms of assembly, homodimer.

Its subcellular location is the cell membrane. Functionally, the homodimer mediates transmembrane sugar transport down a concentration gradient. Transport is probably effected by rocking-type movements, where a cargo-binding cavity opens first on one and then on the other side of the membrane. The sequence is that of Sugar transporter SemiSWEET from Leptospira biflexa serovar Patoc (strain Patoc 1 / ATCC 23582 / Paris).